We begin with the raw amino-acid sequence, 100 residues long: Esterase PE11 (100 aa).

In terms of domain architecture, PE spans 4–94; sequence VTTRPDSIGE…TSYWLTELAN (91 aa).

Belongs to the mycobacterial PE family.

It is found in the secreted. Its subcellular location is the cell wall. The catalysed reaction is an acetyl ester + H2O = an aliphatic alcohol + acetate + H(+). It catalyses the reaction a butanoate ester + H2O = an aliphatic alcohol + butanoate + H(+). It carries out the reaction an octanoate ester + H2O = an aliphatic alcohol + octanoate + H(+). Its function is as follows. Involved in cell wall lipids remodeling and in virulence. Restricts the biofilm growth and is essential for the optimal intracellular survival of M.tuberculosis. Shows esterase activity with a preference for short-chain esters, particularly pNP-acetate (C2) and pNP-butyrate (C4). Has weaker activity with pNP-octanoate (C8), pNP-laurate (C12) and pNP-myristate (C14). Shows weak long-chain triacylglycerol (TAG) hydrolase activity in vitro. Not necessary for PPE17 stability or for its localization on the mycobacterial surface. This Mycobacterium tuberculosis (strain ATCC 25618 / H37Rv) protein is Esterase PE11.